Consider the following 505-residue polypeptide: 2,3-bisphosphoglycerate-independent phosphoglycerate mutase (505 aa).

The Mn(2+) site is built by D12 and S62. Residue S62 is the Phosphoserine intermediate of the active site. Residues H123, 153–154 (RD), R185, R191, 257–260 (RPDR), and K330 each bind substrate. Residues D397, H401, D438, H439, and H456 each coordinate Mn(2+).

This sequence belongs to the BPG-independent phosphoglycerate mutase family. As to quaternary structure, monomer. It depends on Mn(2+) as a cofactor.

The catalysed reaction is (2R)-2-phosphoglycerate = (2R)-3-phosphoglycerate. It functions in the pathway carbohydrate degradation; glycolysis; pyruvate from D-glyceraldehyde 3-phosphate: step 3/5. Its function is as follows. Catalyzes the interconversion of 2-phosphoglycerate and 3-phosphoglycerate. This chain is 2,3-bisphosphoglycerate-independent phosphoglycerate mutase, found in Staphylococcus haemolyticus (strain JCSC1435).